A 1891-amino-acid polypeptide reads, in one-letter code: Protein TIC 214 (1891 aa).

The next 6 membrane-spanning stretches (helical) occupy residues 18–38 (IINSVVVVGLYYGFLTTFSIG), 64–84 (FITGQLMMFISIYYAPLHLAL), 87–107 (PHTITVLALPYLLFHFFWNNH), 124–144 (LSIQCVFLNNLIFQLFNHFIL), 172–192 (VGWLIGHILFMKWLGLVLVWI), and 221–241 (IFSILLFITCVYYLGRIPSPI). Disordered stretches follow at residues 248–300 (EASK…EGWD), 788–807 (EEQTKREEKKEKDKKEDNKR), and 1580–1607 (KNRSQEAKEPPSQRERGSDIENKGNLSP). Over residues 256–268 (VESEEERDVEIET) the composition is skewed to acidic residues. Residues 1582–1601 (RSQEAKEPPSQRERGSDIEN) are compositionally biased toward basic and acidic residues.

Belongs to the TIC214 family. Part of the Tic complex.

Its subcellular location is the plastid. The protein localises to the chloroplast inner membrane. Functionally, involved in protein precursor import into chloroplasts. May be part of an intermediate translocation complex acting as a protein-conducting channel at the inner envelope. This chain is Protein TIC 214, found in Solanum lycopersicum (Tomato).